Here is a 149-residue protein sequence, read N- to C-terminus: Gonadotropin subunit beta-2 (149 aa).

The N-terminal stretch at 1–24 is a signal peptide; that stretch reads MARIPECTILLLLCMCVLAVPAQC. 6 disulfide bridges follow: cysteine 30–cysteine 78, cysteine 44–cysteine 93, cysteine 47–cysteine 131, cysteine 55–cysteine 109, cysteine 59–cysteine 111, and cysteine 114–cysteine 121. Asparagine 34 carries an N-linked (GlcNAc...) asparagine glycan.

The protein belongs to the glycoprotein hormones subunit beta family. As to quaternary structure, heterodimer of an alpha and a beta chain.

The protein resides in the secreted. Involved in gametogenesis and steroidogenesis. The polypeptide is Gonadotropin subunit beta-2 (cgbb) (Clupea pallasii (Pacific herring)).